A 358-amino-acid polypeptide reads, in one-letter code: Phenylalanine--tRNA ligase alpha subunit (358 aa).

A Mg(2+)-binding site is contributed by Glu-279.

Belongs to the class-II aminoacyl-tRNA synthetase family. Phe-tRNA synthetase alpha subunit type 1 subfamily. In terms of assembly, tetramer of two alpha and two beta subunits. Requires Mg(2+) as cofactor.

It localises to the cytoplasm. The catalysed reaction is tRNA(Phe) + L-phenylalanine + ATP = L-phenylalanyl-tRNA(Phe) + AMP + diphosphate + H(+). The chain is Phenylalanine--tRNA ligase alpha subunit from Variovorax paradoxus (strain S110).